We begin with the raw amino-acid sequence, 204 residues long: Allurin (204 aa).

The first 19 residues, 1–19, serve as a signal peptide directing secretion; the sequence is MDTFNFIICISALFHSTYG. In terms of domain architecture, SCP spans 36-138; the sequence is VDLHNLLRRS…DKMIGHYTQV (103 aa). Residues 140–161 traverse the membrane as a helical segment; sequence WAKTYLLGCGLAFCPGNYYPYV.

The protein belongs to the CRISP family. Expressed only in oviduct.

It localises to the membrane. It is found in the secreted. Functionally, involved in sperm chemoattraction. In Xenopus tropicalis (Western clawed frog), this protein is Allurin (crisp-a).